Consider the following 140-residue polypeptide: Myelodysplastic syndrome 2 translocation-associated protein (140 aa).

Highly expressed in peripheral blood leukocytes, spleen, thymus, kidney, pancreas and lung.

The polypeptide is Myelodysplastic syndrome 2 translocation-associated protein (MDS2) (Homo sapiens (Human)).